The chain runs to 435 residues: Methylenetetrahydrofolate--tRNA-(uracil-5-)-methyltransferase TrmFO (435 aa).

FAD is bound at residue Gly7–Gly12.

This sequence belongs to the MnmG family. TrmFO subfamily. The cofactor is FAD.

Its subcellular location is the cytoplasm. It catalyses the reaction uridine(54) in tRNA + (6R)-5,10-methylene-5,6,7,8-tetrahydrofolate + NADH + H(+) = 5-methyluridine(54) in tRNA + (6S)-5,6,7,8-tetrahydrofolate + NAD(+). The enzyme catalyses uridine(54) in tRNA + (6R)-5,10-methylene-5,6,7,8-tetrahydrofolate + NADPH + H(+) = 5-methyluridine(54) in tRNA + (6S)-5,6,7,8-tetrahydrofolate + NADP(+). Functionally, catalyzes the folate-dependent formation of 5-methyl-uridine at position 54 (M-5-U54) in all tRNAs. This is Methylenetetrahydrofolate--tRNA-(uracil-5-)-methyltransferase TrmFO from Thermotoga neapolitana (strain ATCC 49049 / DSM 4359 / NBRC 107923 / NS-E).